Reading from the N-terminus, the 353-residue chain is Aromatic amino acid aminotransferase (353 aa).

Lysine 217 carries the N6-(pyridoxal phosphate)lysine modification.

The protein belongs to the class-II pyridoxal-phosphate-dependent aminotransferase family. As to quaternary structure, homodimer. Pyridoxal 5'-phosphate serves as cofactor.

It carries out the reaction an aromatic L-alpha-amino acid + 2-oxoglutarate = an aromatic oxo-acid + L-glutamate. Functionally, aminotransferase that catalyzes the conversion of aromatic amino acids and 2-oxoglutarate into corresponding aromatic oxo acids and L-glutamate. The chain is Aromatic amino acid aminotransferase from Mycobacterium tuberculosis (strain ATCC 25177 / H37Ra).